Here is a 230-residue protein sequence, read N- to C-terminus: Phosducin-like protein 1 (230 aa).

N-acetylmethionine is present on M1. The region spanning 16–166 (AEKDKHTTVD…VVGYKNGLEK (151 aa)) is the Phosducin domain. The stretch at 25 to 79 (DSDDKSSGEENLDELLNELDRELDEDHEFLSAYRSERLQQISDHLKQVKKNVEDD) forms a coiled coil. The tract at residues 81-230 (YGRLQCIDNE…RSESDSDLDI (150 aa)) is thioredoxin fold.

Belongs to the phosducin family. In terms of assembly, interacts with the G protein beta-gamma subunit complex (STE4-STE18 complex).

The protein localises to the cytoplasm. Functionally, not essential for growth. Inhibits early G-protein signaling events following pheromone stimulation. May help create heterodimerizable beta-tubulin by facilitating the efficient transfer of nascent beta-tubulin polypeptides to the folding apparatus. The protein is Phosducin-like protein 1 (PLP1) of Saccharomyces cerevisiae (strain ATCC 204508 / S288c) (Baker's yeast).